An 89-amino-acid polypeptide reads, in one-letter code: Small ribosomal subunit protein uS15 (89 aa).

This sequence belongs to the universal ribosomal protein uS15 family. As to quaternary structure, part of the 30S ribosomal subunit. Forms a bridge to the 50S subunit in the 70S ribosome, contacting the 23S rRNA.

One of the primary rRNA binding proteins, it binds directly to 16S rRNA where it helps nucleate assembly of the platform of the 30S subunit by binding and bridging several RNA helices of the 16S rRNA. Its function is as follows. Forms an intersubunit bridge (bridge B4) with the 23S rRNA of the 50S subunit in the ribosome. In Lacticaseibacillus casei (strain BL23) (Lactobacillus casei), this protein is Small ribosomal subunit protein uS15.